The chain runs to 342 residues: CD2 antigen cytoplasmic tail-binding protein 2 (342 aa).

Positions 1–64 (MPKRKVTFQG…DEEGSSKYDI (64 aa)) are disordered. Residue K26 forms a Glycyl lysine isopeptide (Lys-Gly) (interchain with G-Cter in SUMO2) linkage. K44 carries the post-translational modification N6-acetyllysine. 3 positions are modified to phosphoserine: S46, S49, and S117. Disordered regions lie at residues 130–150 (RPPD…GQTP) and 177–200 (LGAR…PQRL). Phosphoserine is present on S196. One can recognise a GYF domain in the interval 281–339 (DVMWEYKWENTGDAELYGPFTSAQMQTWVSEGYFPDGVYCRKLDPPGGQFYNSKRIDFE).

As to quaternary structure, component of the U5 snRNP complex composed of the U5 snRNA and at least PRPF6, PRPF8, SNRNP200, EFTUD2, SNRNP40, DDX23, TXNL4A and CD2BP2. Interacts directly with TXNL4A and PRPF6. Interacts (via GYF domain) with CD2 (via Pro-rich sequence in the cytoplasmic domain). Interacts with PQBP1.

It localises to the cytoplasm. The protein resides in the nucleus. In terms of biological role, involved in pre-mRNA splicing as component of the U5 snRNP complex that is involved in spliceosome assembly. The chain is CD2 antigen cytoplasmic tail-binding protein 2 (Cd2bp2) from Mus musculus (Mouse).